The sequence spans 247 residues: uncharacterized protein (247 aa).

This is an uncharacterized protein from Archaeoglobus fulgidus (strain ATCC 49558 / DSM 4304 / JCM 9628 / NBRC 100126 / VC-16).